We begin with the raw amino-acid sequence, 1181 residues long: Pesticidal crystal protein Cry1Ae (1181 aa).

It belongs to the delta endotoxin family.

Functionally, promotes colloidosmotic lysis by binding to the midgut epithelial cells of many lepidopteran larvae. In Bacillus thuringiensis subsp. alesti, this protein is Pesticidal crystal protein Cry1Ae (cry1Ae).